Reading from the N-terminus, the 941-residue chain is Coiled-coil and C2 domain-containing protein 1A (941 aa).

Phosphothreonine is present on Thr-91. Disordered regions lie at residues 183 to 248 (TINE…PCSP) and 301 to 336 (SRLPPPPDQLSPEPPLPAAQPVTPASTLTRPEVPQP). Polar residues predominate over residues 228–239 (APSTTAQTSAKP). Residue Ser-247 is modified to Phosphoserine. The span at 303–318 (LPPPPDQLSPEPPLPA) shows a compositional bias: pro residues. The stretch at 338-384 (KNLLEALEQRMERYHVAAAQAKAKGDQRKARMHERIVKQYQDAIRAH) forms a coiled coil. A disordered region spans residues 428–482 (ANHEEGSDEEEEETPKKNTPAASTAQPKASPSRAPPSGPAPAGKAASKGTSTRAQ). Phosphoserine is present on Ser-434. Low complexity predominate over residues 467 to 476 (APAGKAASKG). A coiled-coil region spans residues 475–508 (KGTSTRAQQQLAFLEGRKKQLLQAALRAKQKNDV). A C2 domain is found at 628–762 (RFEQRTFSVI…ETACEVHEIL (135 aa)).

Belongs to the CC2D1 family. As to expression, strongly expressed in several brain areas including frontal cortex, cortex, mesencephalon, hippocampus, midbrain and hypothalamus. Also expressed in testis and at low levels in pituitary, liver and kidney. In brain the highest levels are detected in hippocampal pyramidal cells and raphe nuclei.

Its subcellular location is the cytoplasm. The protein resides in the nucleus. It localises to the cytoskeleton. The protein localises to the microtubule organizing center. It is found in the centrosome. In terms of biological role, transcription factor that binds specifically to the DRE (dual repressor element) and represses 5-HT1A gene transcription though this element. Mediates HDAC-independent repression of HTR1A promoter. CAMK2G inhibits CC2D1a-induced repression of the HTR1A. May play a role in the altered regulation of 5-HT1A receptors associated with anxiety and major depression. Performs essential function in controlling functional maturation of synapses. The protein is Coiled-coil and C2 domain-containing protein 1A (Cc2d1a) of Rattus norvegicus (Rat).